The following is a 422-amino-acid chain: Large ribosomal subunit protein uL4 (422 aa).

Alanine 2 is modified (N-acetylalanine). Lysine 14 is modified (N6-acetyllysine). Arginine 97 is subject to Omega-N-methylarginine. Lysine 106 bears the N6-acetyllysine mark. Residue lysine 239 forms a Glycyl lysine isopeptide (Lys-Gly) (interchain with G-Cter in SUMO2) linkage. Lysine 259 carries the post-translational modification N6-acetyllysine. Threonine 266 carries the phosphothreonine modification. Phosphoserine occurs at positions 290 and 295. Citrulline is present on arginine 300. Residue lysine 327 forms a Glycyl lysine isopeptide (Lys-Gly) (interchain with G-Cter in SUMO2) linkage. Lysine 333 and lysine 353 each carry N6-acetyllysine. A disordered region spans residues 359-422 (EAKSDQKGVQ…PTSEEKKAAA (64 aa)). An N6-acetyllysine; alternate modification is found at lysine 361. Lysine 361 is covalently cross-linked (Glycyl lysine isopeptide (Lys-Gly) (interchain with G-Cter in SUMO1); alternate). The residue at position 362 (serine 362) is a Phosphoserine. 2 stretches are compositionally biased toward basic and acidic residues: residues 376 to 385 (NKEKKAVGDK) and 402 to 422 (PAAE…KAAA).

The protein belongs to the universal ribosomal protein uL4 family. As to quaternary structure, component of the large ribosomal subunit. May bind IPO9 with low affinity. Interacts with RBM3. Citrullinated by PADI4.

The protein localises to the cytoplasm. Component of the large ribosomal subunit. The ribosome is a large ribonucleoprotein complex responsible for the synthesis of proteins in the cell. In Bos taurus (Bovine), this protein is Large ribosomal subunit protein uL4 (RPL4).